The following is a 60-amino-acid chain: Large ribosomal subunit protein uL30 (60 aa).

This sequence belongs to the universal ribosomal protein uL30 family. In terms of assembly, part of the 50S ribosomal subunit.

This chain is Large ribosomal subunit protein uL30, found in Streptococcus suis (strain 98HAH33).